Consider the following 566-residue polypeptide: Serine/threonine-protein kinase PknE (566 aa).

Residues 1-337 lie on the Cytoplasmic side of the membrane; that stretch reads MDGTAESREG…PLPRSARQPW (337 aa). S7 bears the Phosphoserine; by autocatalysis mark. Phosphothreonine; by autocatalysis is present on T11. Positions 16–275 constitute a Protein kinase domain; that stretch reads YRLRRLVGRG…DLSAAAHAAL (260 aa). ATP contacts are provided by residues 22–30 and K45; that span reads VGRGGMGDV. A phosphothreonine; by autocatalysis mark is found at T50 and T59. D139 serves as the catalytic Proton acceptor. Phosphothreonine; by autocatalysis occurs at positions 170, 175, and 178. A disordered region spans residues 296 to 330; it reads PVPSTHPVSPGTRWPQPTPWAGGAPPWGPPSSPLP. The chain crosses the membrane as a helical span at residues 338 to 358; the sequence is LWVGVAVAVVVALAGGLGIAL. Topologically, residues 359-566 are extracellular; that stretch reads AHPWRSSGPR…DPSWLARLIG (208 aa).

This sequence belongs to the protein kinase superfamily. Ser/Thr protein kinase family. As to quaternary structure, homodimer. Post-translationally, autophosphorylated on serine and threonine residues. Dephosphorylated by PstP.

The protein resides in the cell membrane. It carries out the reaction L-seryl-[protein] + ATP = O-phospho-L-seryl-[protein] + ADP + H(+). It catalyses the reaction L-threonyl-[protein] + ATP = O-phospho-L-threonyl-[protein] + ADP + H(+). Functionally, a serine/threonine-protein kinase, acts on HupB in vitro, modifying at least 2 Ser and 8 Thr residues. Important for bacterial survival in the host during infection. The polypeptide is Serine/threonine-protein kinase PknE (Mycobacterium tuberculosis (strain ATCC 25177 / H37Ra)).